The primary structure comprises 503 residues: Pentatricopeptide repeat-containing protein At2g30100, chloroplastic (503 aa).

Residues 1-50 constitute a chloroplast transit peptide; it reads MAYAHVFASLTISTISLRRFLPRLHRNHSVKPNSRIICNLKLNYSAGKFR. 3 PPR repeats span residues 341-375, 376-410, and 411-445; these read IGVVHERLLAMYICAGRGPEAEKQLWKMKLAGREP, EADLHDIVMAICASQKEVNAVSRLLTRVEFMGSQR, and KKKTLSWLLRGYVKGGHFEEAAETLVSMIDSGLHP.

This sequence belongs to the PPR family. P subfamily.

It localises to the plastid. Its subcellular location is the chloroplast. This chain is Pentatricopeptide repeat-containing protein At2g30100, chloroplastic, found in Arabidopsis thaliana (Mouse-ear cress).